Consider the following 84-residue polypeptide: Exodeoxyribonuclease 7 small subunit (84 aa).

Residues 65-84 (QEGDWTTSPFEPASGEPPGG) are disordered.

The protein belongs to the XseB family. In terms of assembly, heterooligomer composed of large and small subunits.

Its subcellular location is the cytoplasm. It carries out the reaction Exonucleolytic cleavage in either 5'- to 3'- or 3'- to 5'-direction to yield nucleoside 5'-phosphates.. In terms of biological role, bidirectionally degrades single-stranded DNA into large acid-insoluble oligonucleotides, which are then degraded further into small acid-soluble oligonucleotides. This is Exodeoxyribonuclease 7 small subunit from Syntrophobacter fumaroxidans (strain DSM 10017 / MPOB).